The chain runs to 548 residues: Spindle pole body-associated protein cut12 (548 aa).

The interaction with plo1 stretch occupies residues 122–325; that stretch reads FKSPLLQSTP…GQQSKYKGKE (204 aa). Residues 123–182 form a disordered region; it reads KSPLLQSTPKPNINNPDNENKSKHDEFDNRYNININESYKNETKSNQRLGEDVPSKKKYP. Polar residues predominate over residues 126-139; sequence LLQSTPKPNINNPD. Basic and acidic residues-rich tracts occupy residues 140–151 and 161–182; these read NENKSKHDEFDN and YKNETKSNQRLGEDVPSKKKYP. A coiled-coil region spans residues 261 to 312; it reads KQKFSMLDSAHSDLELELTSIRERLESLILEKQEEINFWKQRCRALETEKIH. The span at 344-356 shows a compositional bias: polar residues; it reads PITTKVVSRPSQS. Disordered stretches follow at residues 344–369 and 510–548; these read PITTKVVSRPSQSDVREPQEQVPSKN and SRVDYDLKSPNQRTANAKKRLEERRRRRKLKLQELQLNS. Positions 522–548 form a coiled coil; the sequence is RTANAKKRLEERRRRRKLKLQELQLNS.

In terms of assembly, self-associates. Interacts with plo1.

It localises to the cytoplasm. The protein localises to the cytoskeleton. It is found in the microtubule organizing center. Its subcellular location is the spindle pole body. In terms of biological role, required for bipolar spindle formation. May act as a regulator of the p34cdc2/cyclin B kinase. Required for full activation of the plo1 kinase. However, in cut12.1 cells at restrictive temperature the H1 kinase does rise concomitant with entry into mitosis, indicating that cut12 is not required for activation of p34cdc2/cyclin B. The cut12.s11 allele may promote cdc2-independent phosphorylation of SPB proteins thereby overcoming the requirement for cdc25 in cell cycle progression. The protein is Spindle pole body-associated protein cut12 (cut12) of Schizosaccharomyces pombe (strain 972 / ATCC 24843) (Fission yeast).